The chain runs to 487 residues: Glutamyl-tRNA(Gln) amidotransferase subunit A (487 aa).

Catalysis depends on charge relay system residues Lys-74 and Ser-149. The Acyl-ester intermediate role is filled by Ser-173.

Belongs to the amidase family. GatA subfamily. Heterotrimer of A, B and C subunits.

The catalysed reaction is L-glutamyl-tRNA(Gln) + L-glutamine + ATP + H2O = L-glutaminyl-tRNA(Gln) + L-glutamate + ADP + phosphate + H(+). In terms of biological role, allows the formation of correctly charged Gln-tRNA(Gln) through the transamidation of misacylated Glu-tRNA(Gln) in organisms which lack glutaminyl-tRNA synthetase. The reaction takes place in the presence of glutamine and ATP through an activated gamma-phospho-Glu-tRNA(Gln). The protein is Glutamyl-tRNA(Gln) amidotransferase subunit A of Prochlorococcus marinus (strain MIT 9211).